A 350-amino-acid chain; its full sequence is S-adenosylmethionine:tRNA ribosyltransferase-isomerase (350 aa).

This sequence belongs to the QueA family. As to quaternary structure, monomer.

The protein localises to the cytoplasm. It catalyses the reaction 7-aminomethyl-7-carbaguanosine(34) in tRNA + S-adenosyl-L-methionine = epoxyqueuosine(34) in tRNA + adenine + L-methionine + 2 H(+). It participates in tRNA modification; tRNA-queuosine biosynthesis. Transfers and isomerizes the ribose moiety from AdoMet to the 7-aminomethyl group of 7-deazaguanine (preQ1-tRNA) to give epoxyqueuosine (oQ-tRNA). This Bacillus thuringiensis subsp. konkukian (strain 97-27) protein is S-adenosylmethionine:tRNA ribosyltransferase-isomerase.